A 338-amino-acid polypeptide reads, in one-letter code: Glycerol-3-phosphate dehydrogenase [NAD(P)+] (338 aa).

4 residues coordinate NADPH: serine 14, tyrosine 15, histidine 35, and lysine 109. Positions 109, 138, and 140 each coordinate sn-glycerol 3-phosphate. NADPH is bound at residue alanine 142. Sn-glycerol 3-phosphate contacts are provided by lysine 194, aspartate 247, serine 257, arginine 258, and asparagine 259. Residue lysine 194 is the Proton acceptor of the active site. An NADPH-binding site is contributed by arginine 258. The NADPH site is built by valine 282 and glutamate 284.

It belongs to the NAD-dependent glycerol-3-phosphate dehydrogenase family.

The protein localises to the cytoplasm. It carries out the reaction sn-glycerol 3-phosphate + NAD(+) = dihydroxyacetone phosphate + NADH + H(+). It catalyses the reaction sn-glycerol 3-phosphate + NADP(+) = dihydroxyacetone phosphate + NADPH + H(+). It functions in the pathway membrane lipid metabolism; glycerophospholipid metabolism. In terms of biological role, catalyzes the reduction of the glycolytic intermediate dihydroxyacetone phosphate (DHAP) to sn-glycerol 3-phosphate (G3P), the key precursor for phospholipid synthesis. In Shewanella putrefaciens (strain CN-32 / ATCC BAA-453), this protein is Glycerol-3-phosphate dehydrogenase [NAD(P)+].